The chain runs to 222 residues: MSLTINALTRDDQGKGASHRLRRNHKIPAIVYGTGKAPRNITLDVFEITRLLENEESYTSVLDLIVDKKKEAVIIKDLQRHPAKNIVTHVDFLRINLKQAIVTSVPLHFNGEENNEAMRLGAILNQFVTSVEVSCLPTDLPHAIDVDISNLTMGEHISFTGLNIPKGVVITALTHGDIETHNRSVVAIQEPRKIAEIEEETSIIVEDENIESNNADKNKSNS.

This sequence belongs to the bacterial ribosomal protein bL25 family. CTC subfamily. Part of the 50S ribosomal subunit; part of the 5S rRNA/L5/L18/L25 subcomplex. Contacts the 5S rRNA. Binds to the 5S rRNA independently of L5 and L18.

In terms of biological role, this is one of the proteins that binds to the 5S RNA in the ribosome where it forms part of the central protuberance. The chain is Large ribosomal subunit protein bL25 from Ruthia magnifica subsp. Calyptogena magnifica.